A 636-amino-acid chain; its full sequence is MYNEIPTNRPATPLLDSIDSPAELRALSEKQLPQLADELRAFLLYTVGQTGGHFGAGLGVVELTIALHYVYDTPEDRLVWDVGHQTYPHKILTSRRERMHSIRQGGGLSGFPKREESPYDTFGVGHSSTSISAAQGMAIGAKMAGTERKVAAIIGDGAMTAGMAFEALNHAAHTETDMLVVLNDNNMSISPNVGGLSTYLSKIWASKFYNSLREGSKQVLGKIPPAWEFARRTEEHFKGFMSPGTLFEEMGFNYVGPINGHDLGDLVRCLRNLREIKGPKLLHVITQKGKGFEPAELDPVGYHALNKIEPKKAAIGAVDAPKKVKFQDVFGQWLCDMAARDDKLIGITPAMCEGSGMVGFAQQFPERFYDVAIAEQHAVTLAAGMACEGQKPVVAIYSTFLQRAYDQLIHDVALQNLDVTFAIDRAGLVGEDGPTHSGSFDISYLRCIPQMLLATPSDENECRQLLYTAYQYPGPAAVRYPRGTGAGAVIEQAMTALPIGKGVVRREGKQVALLCFGTLLPTAAQVAEKLGASLCDMRFVKPLDSELIARMAASHSLLVTLEENALAGGAGSAVSEYLNSQGIAIPLLQLGFADEFIDHNSQKQQLAQQGLDAKGIETAITQHLAMMAAATKAVAG.

Thiamine diphosphate contacts are provided by residues H84 and 125-127 (GHS). Position 156 (D156) interacts with Mg(2+). Thiamine diphosphate-binding positions include 157-158 (GA), N185, F292, and E375. Position 185 (N185) interacts with Mg(2+).

The protein belongs to the transketolase family. DXPS subfamily. Homodimer. It depends on Mg(2+) as a cofactor. Thiamine diphosphate is required as a cofactor.

The enzyme catalyses D-glyceraldehyde 3-phosphate + pyruvate + H(+) = 1-deoxy-D-xylulose 5-phosphate + CO2. It participates in metabolic intermediate biosynthesis; 1-deoxy-D-xylulose 5-phosphate biosynthesis; 1-deoxy-D-xylulose 5-phosphate from D-glyceraldehyde 3-phosphate and pyruvate: step 1/1. In terms of biological role, catalyzes the acyloin condensation reaction between C atoms 2 and 3 of pyruvate and glyceraldehyde 3-phosphate to yield 1-deoxy-D-xylulose-5-phosphate (DXP). This Cellvibrio japonicus (strain Ueda107) (Pseudomonas fluorescens subsp. cellulosa) protein is 1-deoxy-D-xylulose-5-phosphate synthase.